The following is a 695-amino-acid chain: Centrosomal protein kizuna (695 aa).

The segment covering 1–12 has biased composition (gly residues); sequence MPRGRGGGGGGL. A disordered region spans residues 1–24; sequence MPRGRGGGGGGLRQASATSAPLAS. Over residues 15–24 the composition is skewed to low complexity; that stretch reads ASATSAPLAS. 2 coiled-coil regions span residues 29 to 57 and 102 to 132; these read ERVGQLQQALRDSEKKRLDLEDKLYEYNK and VEHLTTNTEKLQKLKTEYEAEVKRMRLLSKD. Disordered regions lie at residues 261 to 313, 351 to 391, 444 to 465, and 633 to 695; these read EIGS…SDRE, HSAW…SDLT, QSFPDSKREPSPDSPRQPEKVP, and SEAS…FYDT. Polar residues-rich tracts occupy residues 263 to 274 and 282 to 297; these read GSSTQHSKSNLS and LHSSLQERLSPENSIT. Composition is skewed to basic and acidic residues over residues 299-313 and 360-377; these read LKCDSSSRSEGSDRE and DLDHGDSKSQKAVLKHEE. The span at 382–391 shows a compositional bias: low complexity; sequence GSSCSSSDLT. At threonine 391 the chain carries Phosphothreonine; by PLK1. Basic and acidic residues predominate over residues 448 to 465; it reads DSKREPSPDSPRQPEKVP. Positions 633–645 are enriched in low complexity; that stretch reads SEASFSSSEGSPL. Serine 667, serine 670, and serine 672 each carry phosphoserine. The span at 676–686 shows a compositional bias: basic and acidic residues; sequence AALRPRDHDMP.

This sequence belongs to the kizuna family. In terms of assembly, interacts with AKAP9, CEP72, ODF2, PCNT and TUBGCP2. In terms of processing, phosphorylation at Thr-391 by PLK1 is not needed for centrosomal localization or pericentriolar material expansion but is indispensable for spindle-pole stabilization.

Its subcellular location is the cytoplasm. The protein resides in the cytoskeleton. It is found in the microtubule organizing center. The protein localises to the centrosome. It localises to the cilium basal body. Its function is as follows. Centrosomal protein required for establishing a robust mitotic centrosome architecture that can endure the forces that converge on the centrosomes during spindle formation. Required for stabilizing the expanded pericentriolar material around the centriole. This chain is Centrosomal protein kizuna (Kiz), found in Mus musculus (Mouse).